A 262-amino-acid polypeptide reads, in one-letter code: MYNLIKDVKKLNPLVIHYTNNVTINDCANVTLAVGASPLMSFSYEEVEEMVSVANSVVINIGTMNSNMLDLFLLAGKAANKYNKPVVLDPVGVFASKARAELTSRLLNEVKFSVVKGNVSEIKFIGGFNVRGKGVDSFDEEEDSTEIIRKIAEKLECVVVATGKIDIITNGKGTYKINNGTDKLKGITGTGCMTASLIASFMAVTENILEAATMGVLTMSLSGELANLNNPPIGTFKENLMNAIYQMDIDALSKNSNIEFLN.

Methionine 40 contacts substrate. Positions 116 and 162 each coordinate ATP. Residue glycine 189 participates in substrate binding.

The protein belongs to the Thz kinase family. Mg(2+) is required as a cofactor.

It catalyses the reaction 5-(2-hydroxyethyl)-4-methylthiazole + ATP = 4-methyl-5-(2-phosphooxyethyl)-thiazole + ADP + H(+). It functions in the pathway cofactor biosynthesis; thiamine diphosphate biosynthesis; 4-methyl-5-(2-phosphoethyl)-thiazole from 5-(2-hydroxyethyl)-4-methylthiazole: step 1/1. Functionally, catalyzes the phosphorylation of the hydroxyl group of 4-methyl-5-beta-hydroxyethylthiazole (THZ). The sequence is that of Hydroxyethylthiazole kinase from Clostridioides difficile (strain 630) (Peptoclostridium difficile).